We begin with the raw amino-acid sequence, 353 residues long: Photosystem II D2 protein (353 aa).

The residue at position 2 (T2) is an N-acetylthreonine. T2 carries the phosphothreonine modification. The helical transmembrane segment at 41–61 (CAYFSLGGWFTGTTFVTSWYT) threads the bilayer. Residue H118 coordinates chlorophyll a. Residues 125–141 (GFMLRQFELARSVQLRP) traverse the membrane as a helical segment. Residues Q130 and N143 each coordinate pheophytin a. A helical membrane pass occupies residues 153–166 (VFVSVFLIYPLGQS). Position 198 (H198) interacts with chlorophyll a. Residues 208–228 (AALLCAIHGATVENTLFEDGD) traverse the membrane as a helical segment. Residues H215 and F262 each coordinate a plastoquinone. H215 contributes to the Fe cation binding site. Residue H269 participates in Fe cation binding. A helical transmembrane segment spans residues 279 to 295 (GLWMSAIGVVGLALNLR).

It belongs to the reaction center PufL/M/PsbA/D family. PSII is composed of 1 copy each of membrane proteins PsbA, PsbB, PsbC, PsbD, PsbE, PsbF, PsbH, PsbI, PsbJ, PsbK, PsbL, PsbM, PsbT, PsbX, PsbY, PsbZ, Psb30/Ycf12, at least 3 peripheral proteins of the oxygen-evolving complex and a large number of cofactors. It forms dimeric complexes. The cofactor is The D1/D2 heterodimer binds P680, chlorophylls that are the primary electron donor of PSII, and subsequent electron acceptors. It shares a non-heme iron and each subunit binds pheophytin, quinone, additional chlorophylls, carotenoids and lipids. There is also a Cl(-1) ion associated with D1 and D2, which is required for oxygen evolution. The PSII complex binds additional chlorophylls, carotenoids and specific lipids..

The protein localises to the plastid. Its subcellular location is the chloroplast thylakoid membrane. It catalyses the reaction 2 a plastoquinone + 4 hnu + 2 H2O = 2 a plastoquinol + O2. Functionally, photosystem II (PSII) is a light-driven water:plastoquinone oxidoreductase that uses light energy to abstract electrons from H(2)O, generating O(2) and a proton gradient subsequently used for ATP formation. It consists of a core antenna complex that captures photons, and an electron transfer chain that converts photonic excitation into a charge separation. The D1/D2 (PsbA/PsbD) reaction center heterodimer binds P680, the primary electron donor of PSII as well as several subsequent electron acceptors. D2 is needed for assembly of a stable PSII complex. In Physcomitrium patens (Spreading-leaved earth moss), this protein is Photosystem II D2 protein.